A 112-amino-acid polypeptide reads, in one-letter code: cAMP-regulated phosphoprotein 19 (112 aa).

N-acetylmethionine is present on Met-1. Positions 1-11 (MSAEVPEAASA) are enriched in low complexity. Residues 1 to 49 (MSAEVPEAASAEEQKEMEDKVTSPEKAEEAKLKARYPHLGQKPGGSDFL) are disordered. Position 2 is an N-acetylserine (Ser-2). Phosphoserine occurs at positions 2 and 23. Residues 12 to 32 (EEQKEMEDKVTSPEKAEEAKL) show a composition bias toward basic and acidic residues. Phosphoserine; by GWL occurs at positions 62 and 104. The disordered stretch occupies residues 72 to 112 (MKNKQLPTATPDKTEVTGDHIPTPQDLPQRKPSLVASKLAG). Position 104 is a phosphoserine; by PKA (Ser-104). Residue Lys-109 is modified to N6-acetyllysine.

In terms of assembly, interacts (when phosphorylated at Ser-62) with PPP2R2D. Interacts with SNCA. Interacts with PPP2R2A; the interaction is direct and this interaction inhibits PP2A activity. Post-translationally, phosphorylation at Ser-62 by MASTL/GWL during mitosis is essential for interaction with PPP2R2D (PR55-delta) and subsequent inactivation of PP2A. Phosphorylated by PKA. As to expression, isoform ARPP-19 is found in all brain regions and also present in non-neuronal tissues. Isoform ARPP-16 is enriched in the caudate nucleus, found in low levels in cerebral cortex.

The protein localises to the cytoplasm. Protein phosphatase inhibitor that specifically inhibits protein phosphatase 2A (PP2A) during mitosis. Inhibition of PP2A is enhanced when ARPP19 is phosphorylated. When phosphorylated at Ser-62 during mitosis, specifically interacts with PPP2R2D (PR55-delta) and inhibits its activity, leading to inactivation of PP2A, an essential condition to keep cyclin-B1-CDK1 activity high during M phase. May indirectly enhance GAP-43 expression. This Bos taurus (Bovine) protein is cAMP-regulated phosphoprotein 19 (ARPP19).